Reading from the N-terminus, the 412-residue chain is Glucose-1-phosphate adenylyltransferase (412 aa).

Residues Tyr98, Gly163, 178–179, and Ser189 contribute to the alpha-D-glucose 1-phosphate site; that span reads EK.

The protein belongs to the bacterial/plant glucose-1-phosphate adenylyltransferase family. As to quaternary structure, homotetramer.

It catalyses the reaction alpha-D-glucose 1-phosphate + ATP + H(+) = ADP-alpha-D-glucose + diphosphate. The protein operates within glycan biosynthesis; glycogen biosynthesis. Its function is as follows. Involved in the biosynthesis of ADP-glucose, a building block required for the elongation reactions to produce glycogen. Catalyzes the reaction between ATP and alpha-D-glucose 1-phosphate (G1P) to produce pyrophosphate and ADP-Glc. In Thermosipho melanesiensis (strain DSM 12029 / CIP 104789 / BI429), this protein is Glucose-1-phosphate adenylyltransferase.